A 619-amino-acid chain; its full sequence is Chitinase C (619 aa).

A signal peptide spans 1–30 (MRFRHKAAALAATLALPLAGLVGLASPAQA). One can recognise a CBM2 domain in the interval 31–134 (ATSATATFAK…KLNGGSCDGT (104 aa)). The Fibronectin type-III domain maps to 144-229 (APGTPTASNI…GAVKVTTTGG (86 aa)). A disordered region spans residues 212–236 (ADQTGPASGAVKVTTTGGGDGGNPG). The span at 227 to 236 (TGGGDGGNPG) shows a compositional bias: gly residues. The GH18 domain occupies 240 to 619 (EVKMGYFTNW…TPAVRTTRRH (380 aa)). Chitin-binding positions include 312–313 (DQ) and 339–342 (GGWT). Residue Glu-382 is the Proton donor of the active site. Residues Tyr-383, 449-452 (MTYD), and Trp-589 contribute to the chitin site.

This sequence belongs to the glycosyl hydrolase 18 family. Chitinase class II subfamily.

It catalyses the reaction Random endo-hydrolysis of N-acetyl-beta-D-glucosaminide (1-&gt;4)-beta-linkages in chitin and chitodextrins.. In Streptomyces lividans, this protein is Chitinase C (chiC).